A 157-amino-acid chain; its full sequence is Phosphopantetheine adenylyltransferase (157 aa).

Threonine 10 provides a ligand contact to substrate. ATP contacts are provided by residues threonine 10–phenylalanine 11 and histidine 18. Residues lysine 42, leucine 74, and arginine 88 each coordinate substrate. ATP-binding positions include glycine 89–arginine 91, glutamate 99, and asparagine 124–serine 130.

The protein belongs to the bacterial CoaD family. Homohexamer. Mg(2+) is required as a cofactor.

The protein localises to the cytoplasm. It carries out the reaction (R)-4'-phosphopantetheine + ATP + H(+) = 3'-dephospho-CoA + diphosphate. It functions in the pathway cofactor biosynthesis; coenzyme A biosynthesis; CoA from (R)-pantothenate: step 4/5. Its function is as follows. Reversibly transfers an adenylyl group from ATP to 4'-phosphopantetheine, yielding dephospho-CoA (dPCoA) and pyrophosphate. This Helicobacter pylori (strain P12) protein is Phosphopantetheine adenylyltransferase.